A 659-amino-acid chain; its full sequence is DNA helicase/primase complex-associated protein (659 aa).

This sequence belongs to the herpesviridae HEPA family. In terms of assembly, associates with the primase and the helicase to form the helicase-primase complex. Interacts with the origin-binding protein. Interacts with the polymerase catalytic subunit.

The protein resides in the host nucleus. Component of the helicase/primase complex. Unwinds the DNA at the replication forks and generates single-stranded DNA for both leading and lagging strand synthesis. The primase synthesizes short RNA primers on the lagging strand that the polymerase presumably elongates using dNTPs. The primase-associated factor has no known catalytic activity in the complex and may serve to facilitate the formation of the replisome by directly interacting with the origin-binding protein and the polymerase. In Human herpesvirus 7 (strain JI) (HHV-7), this protein is DNA helicase/primase complex-associated protein (U74).